The following is a 472-amino-acid chain: UDP-N-acetylmuramate--L-alanine ligase (472 aa).

An ATP-binding site is contributed by G118 to T124.

This sequence belongs to the MurCDEF family.

It localises to the cytoplasm. The catalysed reaction is UDP-N-acetyl-alpha-D-muramate + L-alanine + ATP = UDP-N-acetyl-alpha-D-muramoyl-L-alanine + ADP + phosphate + H(+). It functions in the pathway cell wall biogenesis; peptidoglycan biosynthesis. Cell wall formation. The protein is UDP-N-acetylmuramate--L-alanine ligase of Methylococcus capsulatus (strain ATCC 33009 / NCIMB 11132 / Bath).